A 357-amino-acid chain; its full sequence is Peptide chain release factor 1 (357 aa).

An N5-methylglutamine modification is found at Q234. Residues 284-304 (RIEGERSEDRKSKIGTGDRSE) are disordered.

Belongs to the prokaryotic/mitochondrial release factor family. In terms of processing, methylated by PrmC. Methylation increases the termination efficiency of RF1.

It is found in the cytoplasm. Functionally, peptide chain release factor 1 directs the termination of translation in response to the peptide chain termination codons UAG and UAA. This Pelagibacter ubique (strain HTCC1062) protein is Peptide chain release factor 1.